The sequence spans 827 residues: Leucine--tRNA ligase (827 aa).

A 'HIGH' region motif is present at residues 42–52; sequence PYPSGNLHMGH. The 'KMSKS' region signature appears at 583–587; the sequence is KMSKS. Position 586 (K586) interacts with ATP.

The protein belongs to the class-I aminoacyl-tRNA synthetase family.

Its subcellular location is the cytoplasm. It carries out the reaction tRNA(Leu) + L-leucine + ATP = L-leucyl-tRNA(Leu) + AMP + diphosphate. The sequence is that of Leucine--tRNA ligase from Desulfitobacterium hafniense (strain DSM 10664 / DCB-2).